The chain runs to 216 residues: Uracil-DNA glycosylase (216 aa).

The Proton acceptor role is filled by aspartate 59.

It belongs to the uracil-DNA glycosylase (UDG) superfamily. UNG family.

It is found in the cytoplasm. The catalysed reaction is Hydrolyzes single-stranded DNA or mismatched double-stranded DNA and polynucleotides, releasing free uracil.. In terms of biological role, excises uracil residues from the DNA which can arise as a result of misincorporation of dUMP residues by DNA polymerase or due to deamination of cytosine. This Idiomarina loihiensis (strain ATCC BAA-735 / DSM 15497 / L2-TR) protein is Uracil-DNA glycosylase.